The following is a 635-amino-acid chain: Sulfite reductase [ferredoxin], chloroplastic (635 aa).

The transit peptide at 1-50 (MSGAIGGAEVHGFRGAAAQLPRSRVLGRPIRVAPPAAARPGGASAGSIRA) directs the protein to the chloroplast. 2 disordered regions span residues 31 to 50 (RVAP…SIRA) and 245 to 267 (PEVT…PEPI). The segment covering 245-254 (PEVTKARNDN) has biased composition (basic and acidic residues). Positions 494, 500, 540, and 544 each coordinate [4Fe-4S] cluster. Cys544 serves as a coordination point for siroheme.

This sequence belongs to the nitrite and sulfite reductase 4Fe-4S domain family. In terms of assembly, monomer. Interacts with ferredoxin. The cofactor is siroheme. It depends on [4Fe-4S] cluster as a cofactor. Post-translationally, phosphorylated; this phosphorylation reduces DNA-binding. As to expression, present in roots and leaves (at protein level). In leaves, sulfite reductase activity is detected in both bundle sheath and mesophyll cell types.

The protein resides in the plastid. Its subcellular location is the chloroplast stroma. The protein localises to the chloroplast nucleoid. It localises to the plastid stroma. It carries out the reaction hydrogen sulfide + 6 oxidized [2Fe-2S]-[ferredoxin] + 3 H2O = sulfite + 6 reduced [2Fe-2S]-[ferredoxin] + 7 H(+). Its activity is regulated as follows. Inhibited by the tryptophan-modifying reagent, N-bromosuccinimide (NBS), by the lysine-modifying reagent, N-acetylsuccinimide and by the arginine-modifying reagent, phenylglyoxal. Complex formation with ferredoxin prevents these inhibitions. In terms of biological role, essential protein with sulfite reductase activity required in assimilatory sulfate reduction pathway during both primary and secondary metabolism and thus involved in development and growth. DNA-binding protein that binds to both double-stranded and single-stranded DNA without significant sequence specificity to reversibly repress the transcriptional activity of chloroplast nucleoids by promoting DNA compaction and possibly regulate DNA replication. The polypeptide is Sulfite reductase [ferredoxin], chloroplastic (SIR) (Zea mays (Maize)).